We begin with the raw amino-acid sequence, 109 residues long: Lipoprotein BsmA (109 aa).

A signal peptide spans 1 to 24; the sequence is MVSRKRNSVIYRFASLLLVLMLSA. Residue Cys25 is the site of N-palmitoyl cysteine attachment. Cys25 is lipidated: S-diacylglycerol cysteine.

It belongs to the BhsA/McbA family.

Its subcellular location is the cell membrane. Its function is as follows. Involved in protection of biofilms against oxidative stress. The protein is Lipoprotein BsmA (bsmA) of Escherichia coli (strain K12).